A 200-amino-acid polypeptide reads, in one-letter code: Small ribosomal subunit protein uS4 (200 aa).

One can recognise an S4 RNA-binding domain in the interval 106–170 (RRLQTIVFKK…SPIANELHPI (65 aa)). Positions 178 to 200 (AERVKEEAEKEAAASEDGGEQDE) are disordered. Over residues 179–190 (ERVKEEAEKEAA) the composition is skewed to basic and acidic residues.

This sequence belongs to the universal ribosomal protein uS4 family. Part of the 30S ribosomal subunit. Contacts protein S5. The interaction surface between S4 and S5 is involved in control of translational fidelity.

In terms of biological role, one of the primary rRNA binding proteins, it binds directly to 16S rRNA where it nucleates assembly of the body of the 30S subunit. With S5 and S12 plays an important role in translational accuracy. In Thermoplasma volcanium (strain ATCC 51530 / DSM 4299 / JCM 9571 / NBRC 15438 / GSS1), this protein is Small ribosomal subunit protein uS4.